The primary structure comprises 321 residues: uncharacterized protein (321 aa).

Topologically, residues 1–6 are extracellular; that stretch reads MDIIRK. The chain crosses the membrane as a helical span at residues 7–29; that stretch reads ISHFAGQTFGIWVIVFAVLGFSF. Residues 30–34 lie on the Cytoplasmic side of the membrane; that stretch reads PSLFT. The helical transmembrane segment at 35–57 threads the bilayer; sequence WISSYITIFLGIIMFGMGLTLQA. Over 58–69 the chain is Extracellular; sequence DDFKELVRKPWQ. Residues 70–92 form a helical membrane-spanning segment; sequence VIIGVIAQYTIMPLVAFGLAFGL. Residues 93–97 are Cytoplasmic-facing; that stretch reads HLPAE. Residues 98-120 form a helical membrane-spanning segment; that stretch reads IAVGVILVGCCPGGTASNVMTFL. Topologically, residues 121-129 are extracellular; the sequence is AKGNTALSV. A helical transmembrane segment spans residues 130-150; it reads AVTTISTLLAPVVTPLLIMLF. Topologically, residues 151 to 159 are cytoplasmic; the sequence is AKEWLPVSP. Residues 160-180 form a helical membrane-spanning segment; sequence GSLFISILQAVLFPIIAGLIV. The Extracellular segment spans residues 181-190; that stretch reads KMFFRKQVAK. A helical membrane pass occupies residues 191–211; sequence AVHALPLVSVIGIVAIVSAVV. The Cytoplasmic portion of the chain corresponds to 212–221; it reads SGNRENLLQS. Residues 222–242 traverse the membrane as a helical segment; sequence GLLIFSVVILHNGIGYLLGFL. The Extracellular portion of the chain corresponds to 243–267; that stretch reads CAKLLKMDYPSQKAIAIEVGMQNSG. Residues 268–288 form a helical membrane-spanning segment; sequence LGAALATAHFSPLSAVPSAIF. Residues 289 to 321 are Cytoplasmic-facing; the sequence is SVWHNLSGSMLATYWSKKVKKKQAGSKSSNLSL.

This sequence belongs to the bile acid:sodium symporter (BASS) (TC 2.A.28) family.

It localises to the cell membrane. This is an uncharacterized protein from Bacillus subtilis (strain 168).